Reading from the N-terminus, the 360-residue chain is N5-carboxyaminoimidazole ribonucleotide synthase (360 aa).

ATP is bound by residues Arg-98, Lys-138, 143-149 (GYDGKGQ), 173-176 (EGFV), Glu-181, His-204, and 255-256 (NE). The 184-residue stretch at 102-285 (KSMFKDLGIP…QFENHLRAVA (184 aa)) folds into the ATP-grasp domain.

The protein belongs to the PurK/PurT family. In terms of assembly, homodimer.

It catalyses the reaction 5-amino-1-(5-phospho-beta-D-ribosyl)imidazole + hydrogencarbonate + ATP = 5-carboxyamino-1-(5-phospho-D-ribosyl)imidazole + ADP + phosphate + 2 H(+). It participates in purine metabolism; IMP biosynthesis via de novo pathway; 5-amino-1-(5-phospho-D-ribosyl)imidazole-4-carboxylate from 5-amino-1-(5-phospho-D-ribosyl)imidazole (N5-CAIR route): step 1/2. Catalyzes the ATP-dependent conversion of 5-aminoimidazole ribonucleotide (AIR) and HCO(3)(-) to N5-carboxyaminoimidazole ribonucleotide (N5-CAIR). The sequence is that of N5-carboxyaminoimidazole ribonucleotide synthase from Pseudomonas aeruginosa (strain ATCC 15692 / DSM 22644 / CIP 104116 / JCM 14847 / LMG 12228 / 1C / PRS 101 / PAO1).